A 502-amino-acid polypeptide reads, in one-letter code: MAMATGKATEEEQPEQGQQQQQLQQQQKQTTLQSTYRFALFFIAGCLAAFGFHALTSSSGSLLGWRLRLHHLPTAHYLQTRDEFAVYSVDELNAFKEFYDKSVSDSVGASLSEAEETNIKEAMGALRLAQEMYMTGKDDKAARLFEHALALAPKHPEVLLRYGEFLEHNQRNIVLADQYYFQALSINPSNTEALANRQRTADVVQLLDERRLSSLDEKRDALSAIHEANSALRRAKKEAYFQHIYHSVGIEGNTMTLAQTRSVLETRMAVDGKSIDEHNEILGMDLAMKYINASLVQKLYITLKDILELHRRVLGHVDPIEGGEFRRNQVYVGGHIPPGPGDLAILMQRFEHWLNSEQSNSLHPVNYAALAHYKLVHIHPFVDGNGRTSRLLMNTLLMRAGYPPVIIPKQQRSQYYHFLKLANEGDIRPFVRFIADCTEKTLDLYLWATSDLPQQIPMLIQTESDGNVLAQLQSHTSSPELYESGSGSGAGAGAGSGQKGMP.

The tract at residues 1–24 is disordered; it reads MAMATGKATEEEQPEQGQQQQQLQ. Low complexity predominate over residues 15-24; the sequence is EQGQQQQQLQ. A helical transmembrane segment spans residues 38–60; sequence FALFFIAGCLAAFGFHALTSSSG. 2 TPR repeats span residues 122 to 155 and 156 to 190; these read AMGA…APKH and PEVL…NPSN. Residues 247 to 252 carry the Inhibitory (S/T)XXXE(G/N) motif motif; it reads SVGIEG. ATP is bound by residues E251 and 332–335; that span reads VGGH. The region spanning 301–436 is the Fido domain; sequence ITLKDILELH…IRPFVRFIAD (136 aa). The active site involves H379. Residues 383–390, 415–416, and N423 each bind ATP; these read DGNGRTSR and YY. A disordered region spans residues 478–502; sequence SPELYESGSGSGAGAGAGSGQKGMP. The segment covering 486-502 has biased composition (gly residues); that stretch reads SGSGAGAGAGSGQKGMP.

Belongs to the fic family. In terms of assembly, homodimer.

Its subcellular location is the membrane. The catalysed reaction is L-tyrosyl-[protein] + ATP = O-(5'-adenylyl)-L-tyrosyl-[protein] + diphosphate. It carries out the reaction L-threonyl-[protein] + ATP = 3-O-(5'-adenylyl)-L-threonyl-[protein] + diphosphate. The enzyme catalyses 3-O-(5'-adenylyl)-L-threonyl-[protein] + H2O = L-threonyl-[protein] + AMP + H(+). Its activity is regulated as follows. The side chain of Glu-251 determines which of the two opposing activities (AMPylase or de-AMPylase) will take place. In response to endoplasmic reticulum stress, mediates de-AMPylase activity. Adenylyltransferase activity is inhibited by the inhibitory helix present at the N-terminus: Glu-251 binds ATP and competes with ATP-binding at Arg-390, thereby preventing adenylyltransferase activity. In unstressed cells, disengagement of Glu-251 promotes adenylyltransferase activity. Activation dissociates ATP-binding from Glu-251, allowing ordered binding of the entire ATP moiety with the alpha-phosphate in an orientation that is productive for accepting an incoming target hydroxyl side chain. Functionally, protein that can both mediate the addition of adenosine 5'-monophosphate (AMP) to specific residues of target proteins (AMPylation), and the removal of the same modification from target proteins (de-AMPylation), depending on the context. The side chain of Glu-251 determines which of the two opposing activities (AMPylase or de-AMPylase) will take place. Acts as a key regulator of the unfolded protein response (UPR) by mediating AMPylation or de-AMPylation of Hsc70-3/BiP. In unstressed cells, acts as an adenylyltransferase by mediating AMPylation of Hsc70-3/BiP at 'Thr-518', thereby inactivating it. In response to endoplasmic reticulum stress, acts as a phosphodiesterase by mediating removal of ATP (de-AMPylation) from Hsc70-3/BiP at 'Thr-518', leading to restore HSPA5/BiP activity. The polypeptide is Protein adenylyltransferase Fic (Drosophila mojavensis (Fruit fly)).